The following is a 369-amino-acid chain: Putative protein FAM10A5 (369 aa).

Positions 38–98 (MGGKVPPATQ…IEPDTDAPQE (61 aa)) are disordered. The span at 49–73 (AKSEENTKEEKPDSKKVEEDLKADE) shows a compositional bias: basic and acidic residues. The span at 89–98 (IEPDTDAPQE) shows a compositional bias: acidic residues. TPR repeat units lie at residues 114-147 (ANDK…NPRL), 149-181 (ILYA…NPDS), and 183-215 (QPYK…DYDE). Residues 256-272 (KAQEEQERAQREEEARR) show a composition bias toward basic and acidic residues. The interval 256–300 (KAQEEQERAQREEEARRQSGAHYGPFPGGFPGGMPGNFPGGMPGM) is disordered. Residues 281–300 (FPGGFPGGMPGNFPGGMPGM) show a composition bias toward gly residues. The STI1 domain maps to 319-358 (DPEALAAMQDPEVMVAFQDVAQNPANMSKYQSNPKVMNLI). Ser-346 is modified (phosphoserine). N6-acetyllysine occurs at positions 353 and 360.

The protein belongs to the FAM10 family.

It localises to the cytoplasm. The protein is Putative protein FAM10A5 (ST13P5) of Homo sapiens (Human).